The sequence spans 1060 residues: Probable serine/threonine-protein kinase MARK-A (1060 aa).

2 stretches are compositionally biased toward basic and acidic residues: residues 1-11 (METLKEEEQFR) and 23-37 (HLKE…EREQ). Disordered regions lie at residues 1–52 (METL…LQLQ) and 67–88 (NKIP…SISV). Low complexity-rich tracts occupy residues 38–52 (QQQQ…LQLQ) and 68–88 (KIPS…SISV). The 253-residue stretch at 109–361 (YLVIKTIGRG…MEEIINHPWL (253 aa)) folds into the Protein kinase domain. ATP-binding positions include 115–123 (IGRGQFGKV) and Lys139. Asp232 acts as the Proton acceptor in catalysis. Residues 409 to 475 (INNINNTMAT…TTTTNATTTT (67 aa)) are compositionally biased toward low complexity. Disordered stretches follow at residues 409–488 (INNI…NNEE), 560–701 (GENS…SPLC), 714–886 (LREK…PVHS), and 899–966 (DDKS…QEPR). The UBA domain occupies 488 to 528 (ELDQEIIEELVGLGFEREELCNSIRQNKYNDAASTYFLLQG). Over residues 577–594 (TVDSPKSTNTPQYRSSNT) the composition is skewed to polar residues. Composition is skewed to low complexity over residues 603 to 613 (QQQQQQQQQQQ), 620 to 637 (QQQN…NNHN), 650 to 699 (STTV…NPSP), and 720 to 760 (TTTN…TSPN). A compositionally biased stretch (polar residues) spans 761–770 (LQPFSLASTA). 2 stretches are compositionally biased toward low complexity: residues 771–799 (NNNN…SLNS) and 811–831 (QQQQ…NSSS). Residues 837–846 (QRQESRKLED) are compositionally biased toward basic and acidic residues. 2 stretches are compositionally biased toward low complexity: residues 904–926 (NSSS…TNNT) and 935–965 (QNSN…QQEP). The region spanning 1008 to 1057 (IECETEGVRFSIEICRLPRLSVNGLKFKRIGGSSWRYKSICKDLLSQMKL) is the KA1 domain.

Belongs to the protein kinase superfamily. CAMK Ser/Thr protein kinase family. SNF1 subfamily.

The catalysed reaction is L-seryl-[protein] + ATP = O-phospho-L-seryl-[protein] + ADP + H(+). It carries out the reaction L-threonyl-[protein] + ATP = O-phospho-L-threonyl-[protein] + ADP + H(+). The polypeptide is Probable serine/threonine-protein kinase MARK-A (mrkA) (Dictyostelium discoideum (Social amoeba)).